The following is a 290-amino-acid chain: 4-hydroxybenzoate octaprenyltransferase (290 aa).

6 consecutive transmembrane segments (helical) span residues 38–58 (LAGM…GVFF), 99–119 (LFGA…SMTI), 141–161 (LPQL…FTAV), 213–233 (LIIG…GWQL), 238–258 (IYYL…KLIV), and 268–288 (AFLN…LSLL).

It belongs to the UbiA prenyltransferase family. Mg(2+) serves as cofactor.

The protein resides in the cell inner membrane. It carries out the reaction all-trans-octaprenyl diphosphate + 4-hydroxybenzoate = 4-hydroxy-3-(all-trans-octaprenyl)benzoate + diphosphate. Its pathway is cofactor biosynthesis; ubiquinone biosynthesis. Functionally, catalyzes the prenylation of para-hydroxybenzoate (PHB) with an all-trans polyprenyl group. Mediates the second step in the final reaction sequence of ubiquinone-8 (UQ-8) biosynthesis, which is the condensation of the polyisoprenoid side chain with PHB, generating the first membrane-bound Q intermediate 3-octaprenyl-4-hydroxybenzoate. The protein is 4-hydroxybenzoate octaprenyltransferase of Sodalis glossinidius (strain morsitans).